The sequence spans 469 residues: Glutamine synthetase (469 aa).

In terms of domain architecture, GS beta-grasp spans 14–98 (NDVKYVDLRF…ITCDVLEPTT (85 aa)). One can recognise a GS catalytic domain in the interval 106 to 469 (PRGIAKKAEA…PVEFDMYYSG (364 aa)). Residues E131 and E133 each coordinate Mg(2+). E209 is a binding site for ATP. 2 residues coordinate Mg(2+): E214 and E221. L-glutamate is bound by residues 265–266 (NG) and G266. H270 is a Mg(2+) binding site. Residues 272 to 274 (HQS) and S274 each bind ATP. 3 residues coordinate L-glutamate: R322, E328, and R340. ATP is bound by residues R340, R345, and K353. E358 serves as a coordination point for Mg(2+). R360 lines the L-glutamate pocket. The residue at position 398 (Y398) is an O-AMP-tyrosine.

Belongs to the glutamine synthetase family. Oligomer of 12 subunits arranged in the form of two hexameric ring. It depends on Mg(2+) as a cofactor.

It localises to the cytoplasm. The catalysed reaction is L-glutamate + NH4(+) + ATP = L-glutamine + ADP + phosphate + H(+). Its activity is regulated as follows. The activity of this enzyme could be controlled by adenylation under conditions of abundant glutamine. Its function is as follows. Catalyzes the ATP-dependent biosynthesis of glutamine from glutamate and ammonia. The sequence is that of Glutamine synthetase from Bradyrhizobium diazoefficiens (strain JCM 10833 / BCRC 13528 / IAM 13628 / NBRC 14792 / USDA 110).